Here is a 256-residue protein sequence, read N- to C-terminus: uncharacterized protein (256 aa).

An HTH cro/C1-type domain is found at 10-64 (IRALRESRDWSLADLAAATGVSTMGLSYLERGARKPHKSTVQKVENGLGLPPGTY). The segment at residues 21–40 (LADLAAATGVSTMGLSYLER) is a DNA-binding region (H-T-H motif).

This is an uncharacterized protein from Mycobacterium bovis (strain ATCC BAA-935 / AF2122/97).